Here is a 167-residue protein sequence, read N- to C-terminus: Phosphopantetheine adenylyltransferase (167 aa).

Ser-8 is a substrate binding site. ATP is bound by residues 8–9 and His-16; that span reads SF. Residues Lys-40, Leu-74, and Arg-88 each coordinate substrate. Residues 89 to 91, Glu-99, and 123 to 129 each bind ATP; these read GLR and WSFVSSS.

The protein belongs to the bacterial CoaD family. Homohexamer. Mg(2+) is required as a cofactor.

The protein localises to the cytoplasm. It catalyses the reaction (R)-4'-phosphopantetheine + ATP + H(+) = 3'-dephospho-CoA + diphosphate. The protein operates within cofactor biosynthesis; coenzyme A biosynthesis; CoA from (R)-pantothenate: step 4/5. Its function is as follows. Reversibly transfers an adenylyl group from ATP to 4'-phosphopantetheine, yielding dephospho-CoA (dPCoA) and pyrophosphate. The polypeptide is Phosphopantetheine adenylyltransferase (Deinococcus radiodurans (strain ATCC 13939 / DSM 20539 / JCM 16871 / CCUG 27074 / LMG 4051 / NBRC 15346 / NCIMB 9279 / VKM B-1422 / R1)).